Consider the following 341-residue polypeptide: tRNA N6-adenosine threonylcarbamoyltransferase (341 aa).

Residues H118 and H122 each coordinate Fe cation. Residues 141-145, D174, G187, and N281 contribute to the substrate site; that span reads LVSGG. D309 is a binding site for Fe cation.

The protein belongs to the KAE1 / TsaD family. Requires Fe(2+) as cofactor.

It is found in the cytoplasm. The enzyme catalyses L-threonylcarbamoyladenylate + adenosine(37) in tRNA = N(6)-L-threonylcarbamoyladenosine(37) in tRNA + AMP + H(+). Its function is as follows. Required for the formation of a threonylcarbamoyl group on adenosine at position 37 (t(6)A37) in tRNAs that read codons beginning with adenine. Is involved in the transfer of the threonylcarbamoyl moiety of threonylcarbamoyl-AMP (TC-AMP) to the N6 group of A37, together with TsaE and TsaB. TsaD likely plays a direct catalytic role in this reaction. The polypeptide is tRNA N6-adenosine threonylcarbamoyltransferase (Desulfitobacterium hafniense (strain Y51)).